Consider the following 203-residue polypeptide: Endo-type membrane-bound lytic murein transglycosylase A (203 aa).

Positions 1-15 (MKLRWLMWLVVFLAG) are cleaved as a signal peptide. Cysteine 16 carries N-palmitoyl cysteine lipidation. Cysteine 16 is lipidated: S-diacylglycerol cysteine.

It belongs to the transglycosylase Slt family.

The protein localises to the cell outer membrane. The enzyme catalyses Endolytic cleavage of the (1-&gt;4)-beta-glycosidic linkage between N-acetylmuramic acid (MurNAc) and N-acetylglucosamine (GlcNAc) residues in peptidoglycan with concomitant formation of a 1,6-anhydrobond in the MurNAc residue.. In terms of biological role, murein-degrading enzyme. May play a role in recycling of muropeptides during cell elongation and/or cell division. Preferentially cleaves at a distance of more than two disaccharide units from the ends of the glycan chain. The sequence is that of Endo-type membrane-bound lytic murein transglycosylase A from Cronobacter sakazakii (strain ATCC BAA-894) (Enterobacter sakazakii).